Here is a 430-residue protein sequence, read N- to C-terminus: Enolase (430 aa).

Glutamine 162 contacts (2R)-2-phosphoglycerate. The Proton donor role is filled by glutamate 204. Mg(2+) contacts are provided by aspartate 241, glutamate 283, and aspartate 310. (2R)-2-phosphoglycerate-binding residues include lysine 335, arginine 364, serine 365, and lysine 386. Lysine 335 functions as the Proton acceptor in the catalytic mechanism.

The protein belongs to the enolase family. Mg(2+) serves as cofactor.

The protein resides in the cytoplasm. It is found in the secreted. The protein localises to the cell surface. The enzyme catalyses (2R)-2-phosphoglycerate = phosphoenolpyruvate + H2O. Its pathway is carbohydrate degradation; glycolysis; pyruvate from D-glyceraldehyde 3-phosphate: step 4/5. Catalyzes the reversible conversion of 2-phosphoglycerate (2-PG) into phosphoenolpyruvate (PEP). It is essential for the degradation of carbohydrates via glycolysis. The polypeptide is Enolase (Mycobacteroides abscessus (strain ATCC 19977 / DSM 44196 / CCUG 20993 / CIP 104536 / JCM 13569 / NCTC 13031 / TMC 1543 / L948) (Mycobacterium abscessus)).